Here is a 209-residue protein sequence, read N- to C-terminus: Large ribosomal subunit protein uL3 (209 aa).

Gln150 is modified (N5-methylglutamine).

The protein belongs to the universal ribosomal protein uL3 family. Part of the 50S ribosomal subunit. Forms a cluster with proteins L14 and L19. In terms of processing, methylated by PrmB.

In terms of biological role, one of the primary rRNA binding proteins, it binds directly near the 3'-end of the 23S rRNA, where it nucleates assembly of the 50S subunit. The polypeptide is Large ribosomal subunit protein uL3 (Proteus mirabilis (strain HI4320)).